A 270-amino-acid polypeptide reads, in one-letter code: Formamidopyrimidine-DNA glycosylase (270 aa).

Catalysis depends on proline 2, which acts as the Schiff-base intermediate with DNA. Catalysis depends on glutamate 3, which acts as the Proton donor. Residue lysine 56 is the Proton donor; for beta-elimination activity of the active site. DNA-binding residues include histidine 89, arginine 107, and arginine 151. The FPG-type zinc finger occupies 236–270; that stretch reads TVYGRAGEPCRVCATPIRLLRQGQRSTYYCPNCQK. Residue arginine 260 is the Proton donor; for delta-elimination activity of the active site.

It belongs to the FPG family. Monomer. Zn(2+) serves as cofactor.

It carries out the reaction Hydrolysis of DNA containing ring-opened 7-methylguanine residues, releasing 2,6-diamino-4-hydroxy-5-(N-methyl)formamidopyrimidine.. It catalyses the reaction 2'-deoxyribonucleotide-(2'-deoxyribose 5'-phosphate)-2'-deoxyribonucleotide-DNA = a 3'-end 2'-deoxyribonucleotide-(2,3-dehydro-2,3-deoxyribose 5'-phosphate)-DNA + a 5'-end 5'-phospho-2'-deoxyribonucleoside-DNA + H(+). Involved in base excision repair of DNA damaged by oxidation or by mutagenic agents. Acts as a DNA glycosylase that recognizes and removes damaged bases. Has a preference for oxidized purines, such as 7,8-dihydro-8-oxoguanine (8-oxoG). Has AP (apurinic/apyrimidinic) lyase activity and introduces nicks in the DNA strand. Cleaves the DNA backbone by beta-delta elimination to generate a single-strand break at the site of the removed base with both 3'- and 5'-phosphates. This Variovorax paradoxus (strain S110) protein is Formamidopyrimidine-DNA glycosylase.